The chain runs to 496 residues: MSEEHVHLDESEVYHIRKQKLAELRTSGFNFPNTFRREHLADALLKQYSETEKQTLEQKHVKVSVAGRIVLRRIMGKASFFHIQDVSGRIQVYLRSNDLPDVYEQFKHWDLGDIVGVQGELFKTNTGELTINAEYVELLTKSLRPLPDKFHGLADQELKYRKRYVDLIANEDSRKTFLIRSHLIKAFREFMDDNHFLEVETPMMHPIPGGALARPFVTHHNTLDMTMYLRIAPELYLKRLVVGGFERVYEINRNFRNEGISTRHNPEFTMLEFYQAYADYNDLMNFTEQLFHYLCDKVLATRQIEYQGQVIDFNKPFERLSVKEAILKYHPDIKAQQLETLEGCRTLLNDLGLPYKETDGLGKLQIILFEETVEHQLFQPTFITEYPTEISPLARRSDTNPEVTDRFEFFIAGREIANGFSELNDAEDQAERFRKQVEEKDAGDLEAMHFDSDYIEALEYGLPPTAGEGIGIDRLVMLFTNSQSIRDVILFPHLRQ.

Glu408 and Glu415 together coordinate Mg(2+).

Belongs to the class-II aminoacyl-tRNA synthetase family. In terms of assembly, homodimer. It depends on Mg(2+) as a cofactor.

It is found in the cytoplasm. It carries out the reaction tRNA(Lys) + L-lysine + ATP = L-lysyl-tRNA(Lys) + AMP + diphosphate. The chain is Lysine--tRNA ligase from Legionella pneumophila (strain Paris).